The primary structure comprises 257 residues: Phosphate import ATP-binding protein PstB (257 aa).

In terms of domain architecture, ABC transporter spans Leu-5–Glu-246. ATP is bound at residue Gly-37 to Ser-44.

The protein belongs to the ABC transporter superfamily. Phosphate importer (TC 3.A.1.7) family. The complex is composed of two ATP-binding proteins (PstB), two transmembrane proteins (PstC and PstA) and a solute-binding protein (PstS).

It is found in the cell membrane. The catalysed reaction is phosphate(out) + ATP + H2O = ADP + 2 phosphate(in) + H(+). Its function is as follows. Part of the ABC transporter complex PstSACB involved in phosphate import. Responsible for energy coupling to the transport system. The chain is Phosphate import ATP-binding protein PstB from Tropheryma whipplei (strain Twist) (Whipple's bacillus).